The primary structure comprises 392 residues: Protein DJ-1 homolog A (392 aa).

PfpI endopeptidase domains lie at 6–174 and 212–378; these read KTVL…EQLF and PQIL…EKFY.

This sequence belongs to the peptidase C56 family. Homodimer. Interacts with CSD1 and GPX2.

It localises to the cytoplasm. Its subcellular location is the cytosol. The protein localises to the nucleus. Involved in oxidative stress response. Confers protection against diverse stresses by binding both CSD1 and GPX2 and mediating the cytosolic activation of the Cu-Zn-dependent superoxide dismutase activity of CSD1. The sequence is that of Protein DJ-1 homolog A (DJ1A) from Arabidopsis thaliana (Mouse-ear cress).